A 706-amino-acid polypeptide reads, in one-letter code: Catalase HPII (706 aa).

Residues His77 and Asn151 contribute to the active site. Tyr365 lines the heme pocket. The disordered stretch occupies residues Glu512–Thr532.

The protein belongs to the catalase family. HPII subfamily. Heme serves as cofactor.

The protein localises to the cytoplasm. The catalysed reaction is 2 H2O2 = O2 + 2 H2O. In terms of biological role, decomposes hydrogen peroxide into water and oxygen; serves to protect cells from the toxic effects of hydrogen peroxide. The protein is Catalase HPII (katE) of Mycobacterium avium.